Reading from the N-terminus, the 591-residue chain is Melatonin-related receptor (591 aa).

Over 1–38 the chain is Extracellular; that stretch reads MATVPKSNMGPTKAVPTPFGCIGCKLPKPDYPPALIIF. The helical transmembrane segment at 39–59 threads the bilayer; it reads MFCAMVITVVVDLIGNSMVIL. The Cytoplasmic segment spans residues 60 to 72; it reads AVTKNKKLRNSGN. A helical transmembrane segment spans residues 73–93; it reads IFVASLSVADMLVAIYPYPLM. Topologically, residues 94 to 111 are extracellular; sequence LYAMSVGGWDLSQLQCQM. Residues C109 and C186 are joined by a disulfide bond. A helical transmembrane segment spans residues 112–132; the sequence is VGLVTGLSVVGSIFNITAIAI. Topologically, residues 133–151 are cytoplasmic; the sequence is NRYCYICHSLQYKRIFSLR. A helical membrane pass occupies residues 152 to 172; sequence NTCIYLVVTWVMTVLAVLPNM. The Extracellular portion of the chain corresponds to 173 to 196; the sequence is YIGTIEYDPRTYTCIFNYVNNPAF. The chain crosses the membrane as a helical span at residues 197–217; the sequence is TVTIVCIHFVLPLIIVGYCYT. Residues 218 to 247 are Cytoplasmic-facing; sequence KIWIKVLAARDPAGQNPDNQFAEVRNFLTM. A helical transmembrane segment spans residues 248–268; sequence FVIFLLFAVCWCPVNVLTVLV. The Extracellular portion of the chain corresponds to 269–281; sequence AVIPKEMAGKIPN. The helical transmembrane segment at 282-302 threads the bilayer; it reads WLYLAAYCIAYFNSCLNAIIY. The Cytoplasmic portion of the chain corresponds to 303 to 591; that stretch reads GILNESFRRE…DSDCSDEMAV (289 aa). Residues 378–427 are disordered; it reads LPGDASAPHSDRASVRPKPQTRSTSVYRKPASIHHKSISGHPKSASVYPK.

The protein belongs to the G-protein coupled receptor 1 family. In terms of assembly, homodimer, and heterodimer with MTNR1A and MTNR1B. Interacts with KAT5. Interacts with RTN4 isoform A/NOGO-A. Interacts with TGFBR1. As to expression, strongly expressed in the brain with highly restricted pattern of expression, confined to a subset of the ependymal cells of the third ventricle and a population of cells in the dorsomedial hypothalamic nucleus.

It is found in the cell membrane. The protein resides in the postsynaptic density. In terms of biological role, g protein-coupled receptor that plays a role in numerous physiological processes including regulation of energy metabolism, neurite outgrowth or cell migration. Promotes self-renewal and neuronal differentiation of neural progenitor cells through activation of the NOTCH and WNT/beta-catenin signaling pathways. Modulates the KAT5-dependent glucocorticoid receptor signaling by modulating KAT5 subcellular compartmentalisation. Also plays a role in the activation TGFBR1 in the absence of TGFBR2 by interfering with FKBP1A binding to TGFBR1, leading to induction of both canonical and non-canonical SMAD signaling pathways resulting in inhibition of proliferation or promotion of migration. The sequence is that of Melatonin-related receptor (Gpr50) from Mus musculus (Mouse).